The following is a 349-amino-acid chain: UDP-3-O-acylglucosamine N-acyltransferase (349 aa).

Histidine 240 acts as the Proton acceptor in catalysis.

It belongs to the transferase hexapeptide repeat family. LpxD subfamily. In terms of assembly, homotrimer.

The enzyme catalyses a UDP-3-O-[(3R)-3-hydroxyacyl]-alpha-D-glucosamine + a (3R)-hydroxyacyl-[ACP] = a UDP-2-N,3-O-bis[(3R)-3-hydroxyacyl]-alpha-D-glucosamine + holo-[ACP] + H(+). It functions in the pathway bacterial outer membrane biogenesis; LPS lipid A biosynthesis. Its function is as follows. Catalyzes the N-acylation of UDP-3-O-acylglucosamine using 3-hydroxyacyl-ACP as the acyl donor. Is involved in the biosynthesis of lipid A, a phosphorylated glycolipid that anchors the lipopolysaccharide to the outer membrane of the cell. This is UDP-3-O-acylglucosamine N-acyltransferase from Porphyromonas gingivalis (strain ATCC BAA-308 / W83).